A 107-amino-acid chain; its full sequence is Thioredoxin (107 aa).

Positions Asp2–Xaa107 constitute a Thioredoxin domain. Cys32 and Cys35 are disulfide-bonded.

Belongs to the thioredoxin family.

In terms of biological role, participates in various redox reactions through the reversible oxidation of its active center dithiol to a disulfide and catalyzes dithiol-disulfide exchange reactions. This is Thioredoxin (trxA) from Allochromatium vinosum (Chromatium vinosum).